The chain runs to 325 residues: NADH-quinone oxidoreductase subunit H (325 aa).

Transmembrane regions (helical) follow at residues 11 to 31 (ILLSILKAVVILLVVVTCGAF), 50 to 69 (NRVGWGGSLQLVADMIKMFF), 81 to 101 (VIFTLAPMIAFTSLLLSFAIV), 114 to 134 (IGILFFLMMAGLAVYAVLFAG), 154 to 174 (VSYEVFLGLSLMGVVAQAGSF), 186 to 206 (LWNVIPQFFGFVTFAIAGVAV), 237 to 257 (FFVGEYIGIVTVSALMVTLFF), 265 to 285 (LPPFVWFALKTAFFMMMFILI), and 304 to 324 (VCLPLTLINLLVTAAVILWQA).

It belongs to the complex I subunit 1 family. In terms of assembly, NDH-1 is composed of 13 different subunits. Subunits NuoA, H, J, K, L, M, N constitute the membrane sector of the complex.

It is found in the cell inner membrane. The catalysed reaction is a quinone + NADH + 5 H(+)(in) = a quinol + NAD(+) + 4 H(+)(out). In terms of biological role, NDH-1 shuttles electrons from NADH, via FMN and iron-sulfur (Fe-S) centers, to quinones in the respiratory chain. The immediate electron acceptor for the enzyme in this species is believed to be ubiquinone. Couples the redox reaction to proton translocation (for every two electrons transferred, four hydrogen ions are translocated across the cytoplasmic membrane), and thus conserves the redox energy in a proton gradient. This subunit may bind ubiquinone. In Salmonella agona (strain SL483), this protein is NADH-quinone oxidoreductase subunit H.